Here is a 539-residue protein sequence, read N- to C-terminus: Chaperonin GroEL 1 (539 aa).

ATP-binding positions include 29-32 (TLGP), 86-90 (DGTTT), Gly-413, 478-480 (NAA), and Asp-494. A disordered region spans residues 520–539 (IVDKPAEPEDDGHGHHGHAH). Over residues 523–533 (KPAEPEDDGHG) the composition is skewed to basic and acidic residues.

This sequence belongs to the chaperonin (HSP60) family. Forms a cylinder of 14 subunits composed of two heptameric rings stacked back-to-back. Interacts with the co-chaperonin GroES.

The protein localises to the cytoplasm. It catalyses the reaction ATP + H2O + a folded polypeptide = ADP + phosphate + an unfolded polypeptide.. Its function is as follows. Together with its co-chaperonin GroES, plays an essential role in assisting protein folding. The GroEL-GroES system forms a nano-cage that allows encapsulation of the non-native substrate proteins and provides a physical environment optimized to promote and accelerate protein folding. In Mycobacterium ulcerans (strain Agy99), this protein is Chaperonin GroEL 1.